The following is a 49-amino-acid chain: Small, acid-soluble spore protein O (49 aa).

A disordered region spans residues 1-49; the sequence is MGKRKANHIVPGMNAASAQGQGTGYNEEFANEPLTAAQRQNNKKRKKNQ.

Belongs to the SspO family.

It localises to the spore core. The sequence is that of Small, acid-soluble spore protein O from Bacillus cytotoxicus (strain DSM 22905 / CIP 110041 / 391-98 / NVH 391-98).